We begin with the raw amino-acid sequence, 586 residues long: Pyruvate kinase (586 aa).

Arginine 32 is a substrate binding site. K(+)-binding residues include asparagine 34, serine 36, aspartate 66, and threonine 67. Residue 34–37 coordinates ATP; the sequence is NFSH. ATP contacts are provided by arginine 73 and lysine 156. Glutamate 222 contacts Mg(2+). Positions 245, 246, and 278 each coordinate substrate. Aspartate 246 contributes to the Mg(2+) binding site.

It belongs to the pyruvate kinase family. This sequence in the C-terminal section; belongs to the PEP-utilizing enzyme family. Requires Mg(2+) as cofactor. The cofactor is K(+).

The catalysed reaction is pyruvate + ATP = phosphoenolpyruvate + ADP + H(+). It participates in carbohydrate degradation; glycolysis; pyruvate from D-glyceraldehyde 3-phosphate: step 5/5. The chain is Pyruvate kinase (pyk) from Staphylococcus saprophyticus subsp. saprophyticus (strain ATCC 15305 / DSM 20229 / NCIMB 8711 / NCTC 7292 / S-41).